A 364-amino-acid polypeptide reads, in one-letter code: GTPase Obg (364 aa).

The Obg domain maps to M1–L159. Positions I128 to G147 are disordered. Residues A160 to D334 enclose the OBG-type G domain. Residues G166–S173, F191–H195, D213–G216, N284–D287, and S315–L317 contribute to the GTP site. 2 residues coordinate Mg(2+): S173 and T193. Positions E340–A364 are disordered. The span at Q349 to A364 shows a compositional bias: basic and acidic residues.

It belongs to the TRAFAC class OBG-HflX-like GTPase superfamily. OBG GTPase family. Monomer. It depends on Mg(2+) as a cofactor.

It is found in the cytoplasm. Its function is as follows. An essential GTPase which binds GTP, GDP and possibly (p)ppGpp with moderate affinity, with high nucleotide exchange rates and a fairly low GTP hydrolysis rate. Plays a role in control of the cell cycle, stress response, ribosome biogenesis and in those bacteria that undergo differentiation, in morphogenesis control. The chain is GTPase Obg from Ralstonia pickettii (strain 12J).